The primary structure comprises 664 residues: MDNKLEKMKKLVEELNQYAYEYYVLDNPSISDKEYDLKYDELVILEKETQVTLPYSPTQRVGDKILGEFSKYTHKGRLWSLDKAQNMEQLIEWHNRNLKVIEQYNSMSEDKLPELRYIVTKKFDGLTVNCTYDENGILIKSATRGTGIIGEDITAQIKTIKTVPLKIKNNHVIEVHGEAIMTKTAFEEYNKAAQVPLKNLRNGAAGALRNLDIKETARRNLSAFFYDVGYNEGPEFKSYREMMNFIRNMGLPQDKYIKECTNMEEVEKEIEYIESIREELDYDIDGAVIVVDDIKTREILGYTIKFPKWAIAYKFEAKEITTKLLDVEWNVGRSGRVTPTALLEPVELGGVTVKRATLNNMDDIKRKNVKLGAKVLVRRSNDVIPEIMGVVEESLEESKEIQAPDRCPYCNSHLVQNGVHYYCENTLSCKPQMVKSIVHFASREAMNIAGFSGKTAEQLFERLDIKSISDLYKIRKEELLTLDKFGDKKSQNLIDAIENSKNCDLASFIYALGIPNVGKKTANDLVMKFKTLESIKNTTIEQLVEVPDVGEIVAKSIYDFFEDEKIISNIEELLNLGVKPYYEEERIDENPFMGKTIVVTGSLNNYSRGEIKDKLQSLGAKVSSSVSKNTDYVLVGEKPGSKYEKAIELGVKVINEEEFSNKIK.

NAD(+) is bound by residues 32-36 and 80-81; these read DKEYD and SL. K122 functions as the N6-AMP-lysine intermediate in the catalytic mechanism. R144, E178, and K314 together coordinate NAD(+). The Zn(2+) site is built by C407, C410, C423, and C429. Positions 587-664 constitute a BRCT domain; sequence IDENPFMGKT…NEEEFSNKIK (78 aa).

This sequence belongs to the NAD-dependent DNA ligase family. LigA subfamily. It depends on Mg(2+) as a cofactor. Mn(2+) serves as cofactor.

The catalysed reaction is NAD(+) + (deoxyribonucleotide)n-3'-hydroxyl + 5'-phospho-(deoxyribonucleotide)m = (deoxyribonucleotide)n+m + AMP + beta-nicotinamide D-nucleotide.. Its function is as follows. DNA ligase that catalyzes the formation of phosphodiester linkages between 5'-phosphoryl and 3'-hydroxyl groups in double-stranded DNA using NAD as a coenzyme and as the energy source for the reaction. It is essential for DNA replication and repair of damaged DNA. This Clostridium botulinum (strain 657 / Type Ba4) protein is DNA ligase.